We begin with the raw amino-acid sequence, 305 residues long: Acetyl-coenzyme A carboxylase carboxyl transferase subunit beta (305 aa).

One can recognise a CoA carboxyltransferase N-terminal domain in the interval Leu-29–Ser-298. Zn(2+) contacts are provided by Cys-33, Cys-36, Cys-52, and Cys-55. The C4-type zinc-finger motif lies at Cys-33–Cys-55.

Belongs to the AccD/PCCB family. Acetyl-CoA carboxylase is a heterohexamer composed of biotin carboxyl carrier protein (AccB), biotin carboxylase (AccC) and two subunits each of ACCase subunit alpha (AccA) and ACCase subunit beta (AccD). Requires Zn(2+) as cofactor.

It is found in the cytoplasm. The enzyme catalyses N(6)-carboxybiotinyl-L-lysyl-[protein] + acetyl-CoA = N(6)-biotinyl-L-lysyl-[protein] + malonyl-CoA. It participates in lipid metabolism; malonyl-CoA biosynthesis; malonyl-CoA from acetyl-CoA: step 1/1. Component of the acetyl coenzyme A carboxylase (ACC) complex. Biotin carboxylase (BC) catalyzes the carboxylation of biotin on its carrier protein (BCCP) and then the CO(2) group is transferred by the transcarboxylase to acetyl-CoA to form malonyl-CoA. This chain is Acetyl-coenzyme A carboxylase carboxyl transferase subunit beta, found in Synechococcus sp. (strain ATCC 27144 / PCC 6301 / SAUG 1402/1) (Anacystis nidulans).